The primary structure comprises 530 residues: NADH-quinone oxidoreductase subunit C/D (530 aa).

An NADH dehydrogenase I subunit C region spans residues 1–144; sequence MQEIQFIVPA…NPLCMANEET (144 aa). An NADH dehydrogenase I subunit D region spans residues 171–530; the sequence is EYVVNIGPQH…LDYVVPDIDR (360 aa).

This sequence in the N-terminal section; belongs to the complex I 30 kDa subunit family. The protein in the C-terminal section; belongs to the complex I 49 kDa subunit family. In terms of assembly, NDH-1 is composed of 13 different subunits. Subunits NuoB, CD, E, F, and G constitute the peripheral sector of the complex.

The protein resides in the cell inner membrane. The catalysed reaction is a quinone + NADH + 5 H(+)(in) = a quinol + NAD(+) + 4 H(+)(out). In terms of biological role, NDH-1 shuttles electrons from NADH, via FMN and iron-sulfur (Fe-S) centers, to quinones in the respiratory chain. The immediate electron acceptor for the enzyme in this species is believed to be a menaquinone. Couples the redox reaction to proton translocation (for every two electrons transferred, four hydrogen ions are translocated across the cytoplasmic membrane), and thus conserves the redox energy in a proton gradient. The protein is NADH-quinone oxidoreductase subunit C/D of Bacteroides thetaiotaomicron (strain ATCC 29148 / DSM 2079 / JCM 5827 / CCUG 10774 / NCTC 10582 / VPI-5482 / E50).